Consider the following 508-residue polypeptide: Glycerol kinase (508 aa).

Thr-14 is an ADP binding site. Residues Thr-14, Thr-15, and Ser-16 each coordinate ATP. Thr-14 contacts sn-glycerol 3-phosphate. Arg-18 contributes to the ADP binding site. Residues Arg-84, Glu-85, and Tyr-136 each contribute to the sn-glycerol 3-phosphate site. Residues Arg-84, Glu-85, and Tyr-136 each contribute to the glycerol site. Residue His-232 is modified to Phosphohistidine; by HPr. Position 246 (Asp-246) interacts with sn-glycerol 3-phosphate. Positions 246 and 247 each coordinate glycerol. ADP contacts are provided by Thr-268 and Gly-311. Thr-268, Gly-311, Gln-315, and Gly-412 together coordinate ATP. Positions 412 and 416 each coordinate ADP.

Belongs to the FGGY kinase family. Homotetramer and homodimer (in equilibrium). The phosphoenolpyruvate-dependent sugar phosphotransferase system (PTS), including enzyme I, and histidine-containing protein (HPr) are required for the phosphorylation, which leads to the activation of the enzyme.

It carries out the reaction glycerol + ATP = sn-glycerol 3-phosphate + ADP + H(+). It functions in the pathway polyol metabolism; glycerol degradation via glycerol kinase pathway; sn-glycerol 3-phosphate from glycerol: step 1/1. Activated by phosphorylation and inhibited by fructose 1,6-bisphosphate (FBP). Functionally, key enzyme in the regulation of glycerol uptake and metabolism. Catalyzes the phosphorylation of glycerol to yield sn-glycerol 3-phosphate. In Streptococcus pyogenes serotype M4 (strain MGAS10750), this protein is Glycerol kinase.